Here is a 340-residue protein sequence, read N- to C-terminus: CMP-sialic acid transporter 1 (340 aa).

Residues 1–5 (MAATP) are Cytoplasmic-facing. Residues 6-26 (WYFVAVLLTILTSSQGILTTL) form a helical membrane-spanning segment. The Lumenal segment spans residues 27–36 (SQSDGGYKYD). Residues 37–57 (YATVPFLAEVFKLIISGLFLW) traverse the membrane as a helical segment. The Cytoplasmic segment spans residues 58-78 (REMRTSSSTTSRITTDWKSVR). The chain crosses the membrane as a helical span at residues 79-99 (LFVIPSLIYLIHNNVQFATLT). At 100 to 102 (YVD) the chain is on the lumenal side. Residues 103–125 (TSTYQIMGNLKIVTTGILFRLFL) traverse the membrane as a helical segment. Over 126–168 (KRKLSKLQWMAIGLLAVGTTTSQVKGCGEASCDSLFTAPIQGY) the chain is Cytoplasmic. Residues 169 to 189 (LLGILSAGLSALAGIYTEFLM) form a helical membrane-spanning segment. Over 190 to 200 (KRNNDTLYWQN) the chain is Lumenal. A helical membrane pass occupies residues 201–217 (LQLYTFGSLFNVARLIA). Topologically, residues 218–238 (DDFRHGFEKGPWWQRIFDGYS) are cytoplasmic. A helical membrane pass occupies residues 239–259 (ITTWLVVLNLGSTGLLVSWLM). Residues 260 to 282 (KYADNIVKVYSTSMAMLLTMVAS) lie on the Lumenal side of the membrane. Residues 283–303 (IYLFSFKPTLQLFLGIVICIM) form a helical membrane-spanning segment. The Cytoplasmic portion of the chain corresponds to 304-340 (SLHMYFAPPHTLVDLPVTNEAHAKTLKQVVVEEKTDS).

It belongs to the nucleotide-sugar transporter family. CMP-Sialate:CMP antiporter (TC 2.A.7.12) subfamily.

It localises to the golgi apparatus membrane. In terms of biological role, essential protein. Sugar transporter involved in the transport of CMP-sialic acid from the cytoplasm into the Golgi. This is CMP-sialic acid transporter 1 from Arabidopsis thaliana (Mouse-ear cress).